Reading from the N-terminus, the 607-residue chain is MNKEERAKRQSKIRNFSIIAHIDHGKSTLADRILEKTNALTQREMKAQLLDSMDLERERGITIKLNAVQLNYKAKDGEEYILHLIDTPGHVDFTYEVSRSLAACEGAILVVDAAQGIEAQTLANVYLALDNNLEILPVINKIDLPSADPERVRQEVEDVIGLDASEAVLASAKAGIGIEEILEQIVEKVPAPAGDSEEPLQCMIFDSLYDPYRGVIAYIRVVNGTVKVGDKVRMMATGKEFEVTEVGVFTPKTTQRDELTVGDVGFLAASIKNVGDTRVGDTITHAKRPAAEPLAGYRKLNPMVFCGLYPIDSARYNDLRDALEKLELNDSALEFEPETSQALGFGFRCGFLGLLHMEIIQERIEREFKIDLITTAPSVIYKVYLTNGEDVIVDNPSNMPDPQSIDRVEEPFVKASIMVPNDYVGAVMEICQGKRGTFIDMQYLDETRVTLTYEIPLSEIVYDFFDQLKSNTKGYASFDYELIGYKPSKLVKMDILLNNEQVDALSFIVHRDSAYDRGKVIVEKLKELIPRQQFEVPIQATIGNKVVARSTIKAMRKNVLAKCYGGDISRKRKLLDKQKEGKKRMKSVGSVEVPQEAFMAVLKMDDN.

A tr-type G domain is found at 11–193 (SKIRNFSIIA…QIVEKVPAPA (183 aa)). Residues 23–28 (DHGKST) and 140–143 (NKID) each bind GTP.

Belongs to the TRAFAC class translation factor GTPase superfamily. Classic translation factor GTPase family. LepA subfamily.

The protein localises to the cell membrane. The catalysed reaction is GTP + H2O = GDP + phosphate + H(+). In terms of biological role, required for accurate and efficient protein synthesis under certain stress conditions. May act as a fidelity factor of the translation reaction, by catalyzing a one-codon backward translocation of tRNAs on improperly translocated ribosomes. Back-translocation proceeds from a post-translocation (POST) complex to a pre-translocation (PRE) complex, thus giving elongation factor G a second chance to translocate the tRNAs correctly. Binds to ribosomes in a GTP-dependent manner. The protein is Elongation factor 4 of Bacillus cereus (strain B4264).